A 265-amino-acid chain; its full sequence is Phosphatidylglycerol--prolipoprotein diacylglyceryl transferase (265 aa).

7 helical membrane passes run 17 to 37 (VAVR…VVLG), 57 to 77 (LLLY…VLFY), 89 to 109 (ILAV…VLVA), 127 to 147 (FIAP…FING), 176 to 196 (QLYQ…VFAA), 201 to 218 (LRAV…LRFV), and 233 to 253 (LVPG…VGLA). R140 contributes to the a 1,2-diacyl-sn-glycero-3-phospho-(1'-sn-glycerol) binding site.

The protein belongs to the Lgt family.

The protein localises to the cell inner membrane. It catalyses the reaction L-cysteinyl-[prolipoprotein] + a 1,2-diacyl-sn-glycero-3-phospho-(1'-sn-glycerol) = an S-1,2-diacyl-sn-glyceryl-L-cysteinyl-[prolipoprotein] + sn-glycerol 1-phosphate + H(+). It participates in protein modification; lipoprotein biosynthesis (diacylglyceryl transfer). Catalyzes the transfer of the diacylglyceryl group from phosphatidylglycerol to the sulfhydryl group of the N-terminal cysteine of a prolipoprotein, the first step in the formation of mature lipoproteins. This Azoarcus sp. (strain BH72) protein is Phosphatidylglycerol--prolipoprotein diacylglyceryl transferase.